Consider the following 876-residue polypeptide: Alanine--tRNA ligase (876 aa).

Positions 568, 572, 670, and 674 each coordinate Zn(2+).

It belongs to the class-II aminoacyl-tRNA synthetase family. Requires Zn(2+) as cofactor.

The protein resides in the cytoplasm. It carries out the reaction tRNA(Ala) + L-alanine + ATP = L-alanyl-tRNA(Ala) + AMP + diphosphate. Functionally, catalyzes the attachment of alanine to tRNA(Ala) in a two-step reaction: alanine is first activated by ATP to form Ala-AMP and then transferred to the acceptor end of tRNA(Ala). Also edits incorrectly charged Ser-tRNA(Ala) and Gly-tRNA(Ala) via its editing domain. The protein is Alanine--tRNA ligase of Geobacter metallireducens (strain ATCC 53774 / DSM 7210 / GS-15).